The following is a 167-amino-acid chain: Small ribosomal subunit protein uS5 (167 aa).

Residues 11–74 (LQEKLIAVNR…EKARRNMINV (64 aa)) enclose the S5 DRBM domain.

The protein belongs to the universal ribosomal protein uS5 family. In terms of assembly, part of the 30S ribosomal subunit. Contacts proteins S4 and S8.

Functionally, with S4 and S12 plays an important role in translational accuracy. In terms of biological role, located at the back of the 30S subunit body where it stabilizes the conformation of the head with respect to the body. In Escherichia coli O139:H28 (strain E24377A / ETEC), this protein is Small ribosomal subunit protein uS5.